The sequence spans 249 residues: Small ribosomal subunit protein uS3 (249 aa).

Positions 23-94 (LNEFFTRELS…TVELYAEKVQ (72 aa)) constitute a KH type-2 domain. 4 positions are modified to phosphoserine: Ser-32, Ser-37, Ser-106, and Ser-141.

This sequence belongs to the universal ribosomal protein uS3 family. Component of the small ribosomal subunit (SSU). Mature yeast ribosomes consist of a small (40S) and a large (60S) subunit. The 40S small subunit contains 1 molecule of ribosomal RNA (18S rRNA) and at least 33 different proteins. The large 60S subunit contains 3 rRNA molecules (25S, 5.8S and 5S rRNA) and at least 46 different proteins.

The protein resides in the cytoplasm. Its function is as follows. Component of the ribosome, a large ribonucleoprotein complex responsible for the synthesis of proteins in the cell. The small ribosomal subunit (SSU) binds messenger RNAs (mRNAs) and translates the encoded message by selecting cognate aminoacyl-transfer RNA (tRNA) molecules. The large subunit (LSU) contains the ribosomal catalytic site termed the peptidyl transferase center (PTC), which catalyzes the formation of peptide bonds, thereby polymerizing the amino acids delivered by tRNAs into a polypeptide chain. The nascent polypeptides leave the ribosome through a tunnel in the LSU and interact with protein factors that function in enzymatic processing, targeting, and the membrane insertion of nascent chains at the exit of the ribosomal tunnel. The chain is Small ribosomal subunit protein uS3 (rps3) from Schizosaccharomyces pombe (strain 972 / ATCC 24843) (Fission yeast).